Reading from the N-terminus, the 78-residue chain is Large ribosomal subunit protein bL28 (78 aa).

Positions 1–21 (MSRVCQVTGKRPVSGNNRSHA) are disordered.

The protein belongs to the bacterial ribosomal protein bL28 family.

This Yersinia enterocolitica serotype O:8 / biotype 1B (strain NCTC 13174 / 8081) protein is Large ribosomal subunit protein bL28.